We begin with the raw amino-acid sequence, 1997 residues long: Otoferlin (1997 aa).

Residues 1–98 (MALLIHLKTV…VEESHVEVTD (98 aa)) form the C2 1 domain. The Cytoplasmic segment spans residues 1-1963 (MALLIHLKTV…ARYFLWHTYR (1963 aa)). Residues 128–171 (WDDGDFLGDESLQEEEKDSQETDGLLPGSRPSSRPPGEKSFRRA) are disordered. Over residues 129–145 (DDGDFLGDESLQEEEKD) the composition is skewed to acidic residues. C2 domains are found at residues 236 to 357 (KRSK…HKWA) and 400 to 531 (IEGN…FLPT). The disordered stretch occupies residues 642–694 (NEVDGLSRPQRPRPRKEPGDEEEVDLIQNASDDEAGDAGDLASVSSTPPMRPQ). Acidic residues predominate over residues 660-678 (GDEEEVDLIQNASDDEAGD). Residues 792-821 (RERLKSCMRELENMGQQARMLRAQVKRHTV) adopt a coiled-coil conformation. 2 C2 domains span residues 944 to 1069 (LHAF…PPRF) and 1115 to 1242 (DRGP…PSWN). The Ca(2+) site is built by Asp-976, Asp-982, Asp-1038, Asp-1040, and Asp-1046. 2 disordered regions span residues 1299-1324 (AEEEKEKKKKKKGTAEEPEEEEPDES) and 1343-1405 (LRQQ…KPKI). 2 stretches are compositionally biased toward acidic residues: residues 1314–1324 (EEPEEEEPDES) and 1352–1361 (DLEEKEEVDN). The span at 1370 to 1383 (KGKEKARAAKEEKK) shows a compositional bias: basic and acidic residues. A compositionally biased stretch (low complexity) spans 1387-1396 (QSSGSGQGSE). C2 domains lie at 1464–1593 (LPED…ATCG) and 1714–1865 (DMPA…KQCT). Residues Asp-1508, Asp-1514, Asp-1563, Asp-1565, Asp-1571, Asp-1836, Ser-1839, and Asp-1842 each contribute to the Ca(2+) site. Residues 1964–1984 (WLLLKLLLLLLLLLLLALFLY) form a helical membrane-spanning segment. Over 1985 to 1997 (SVPGYLVKKILGA) the chain is Extracellular.

This sequence belongs to the ferlin family. In terms of assembly, interacts with SNAP2; the interaction is direct. Interacts with STX1; the interaction is direct. Interacts with RAB8B. Ca(2+) is required as a cofactor. In terms of tissue distribution, isoform 1 and isoform 3 are found in adult brain. Isoform 2 is expressed in the fetus and in adult brain, heart, placenta, skeletal muscle and kidney.

Its subcellular location is the cytoplasmic vesicle. The protein resides in the secretory vesicle. It is found in the synaptic vesicle membrane. The protein localises to the basolateral cell membrane. It localises to the endoplasmic reticulum membrane. Its subcellular location is the golgi apparatus membrane. The protein resides in the presynaptic cell membrane. It is found in the cell membrane. Key calcium ion sensor involved in the Ca(2+)-triggered synaptic vesicle-plasma membrane fusion and in the control of neurotransmitter release at these output synapses. Interacts in a calcium-dependent manner to the presynaptic SNARE proteins at ribbon synapses of cochlear inner hair cells (IHCs) to trigger exocytosis of neurotransmitter. Also essential to synaptic exocytosis in immature outer hair cells (OHCs). May also play a role within the recycling of endosomes. The sequence is that of Otoferlin (OTOF) from Homo sapiens (Human).